A 251-amino-acid chain; its full sequence is Pyridoxine 5'-phosphate synthase (251 aa).

2 residues coordinate 3-amino-2-oxopropyl phosphate: Asn-8 and Arg-19. The Proton acceptor role is filled by His-44. Residues Arg-46 and His-51 each coordinate 1-deoxy-D-xylulose 5-phosphate. The active-site Proton acceptor is the Glu-76. Residue Thr-106 participates in 1-deoxy-D-xylulose 5-phosphate binding. His-200 acts as the Proton donor in catalysis. Residues Asp-201 and 223–224 (GH) contribute to the 3-amino-2-oxopropyl phosphate site.

The protein belongs to the PNP synthase family. In terms of assembly, homooctamer; tetramer of dimers.

The protein localises to the cytoplasm. It carries out the reaction 3-amino-2-oxopropyl phosphate + 1-deoxy-D-xylulose 5-phosphate = pyridoxine 5'-phosphate + phosphate + 2 H2O + H(+). The protein operates within cofactor biosynthesis; pyridoxine 5'-phosphate biosynthesis; pyridoxine 5'-phosphate from D-erythrose 4-phosphate: step 5/5. Its function is as follows. Catalyzes the complicated ring closure reaction between the two acyclic compounds 1-deoxy-D-xylulose-5-phosphate (DXP) and 3-amino-2-oxopropyl phosphate (1-amino-acetone-3-phosphate or AAP) to form pyridoxine 5'-phosphate (PNP) and inorganic phosphate. This chain is Pyridoxine 5'-phosphate synthase, found in Agrobacterium fabrum (strain C58 / ATCC 33970) (Agrobacterium tumefaciens (strain C58)).